The chain runs to 264 residues: Spermidine/putrescine transport system permease protein PotC (264 aa).

6 helical membrane-spanning segments follow: residues 10–30 (FMTA…VNSF), 66–86 (MAVF…VALY), 109–129 (IVMA…LGFW), 131–151 (LLFS…YSRL), 176–196 (IILP…FTLS), and 232–252 (ALAT…QLIA). The ABC transmembrane type-1 domain maps to 60-248 (AQHSLTMAVF…VLSLVMVIAS (189 aa)).

Belongs to the binding-protein-dependent transport system permease family. CysTW subfamily.

Its subcellular location is the cell inner membrane. In terms of biological role, required for the activity of the bacterial periplasmic transport system of putrescine and spermidine. The chain is Spermidine/putrescine transport system permease protein PotC (potC) from Shigella flexneri.